The following is a 508-amino-acid chain: Catalase (508 aa).

The first 21 residues, 1–21, serve as a signal peptide directing secretion; it reads MHMSKSFLLISMGLASISVHA. Active-site residues include His72 and Asn145. Heme is bound at residue Tyr353. The span at 373–392 shows a compositional bias: polar residues; the sequence is PKSPVANHNQDGPSNNSTGL. The segment at 373–396 is disordered; it reads PKSPVANHNQDGPSNNSTGLGNVD.

The protein belongs to the catalase family. It depends on heme as a cofactor.

Its subcellular location is the periplasm. The enzyme catalyses 2 H2O2 = O2 + 2 H2O. Its function is as follows. Decomposes hydrogen peroxide into water and oxygen; serves to protect cells from the toxic effects of hydrogen peroxide. The sequence is that of Catalase from Vibrio vulnificus (strain CMCP6).